Reading from the N-terminus, the 346-residue chain is Actin-like protein 10 (346 aa).

This sequence belongs to the actin family.

In Mus musculus (Mouse), this protein is Actin-like protein 10 (Actl10).